Reading from the N-terminus, the 240-residue chain is Uridylate kinase (240 aa).

12-15 (KLSG) contributes to the ATP binding site. Position 54 (G54) interacts with UMP. ATP is bound by residues G55 and R59. UMP is bound by residues D74 and 135–142 (TGNPFFTT). Positions 162, 168, and 171 each coordinate ATP.

Belongs to the UMP kinase family. As to quaternary structure, homohexamer.

It localises to the cytoplasm. The catalysed reaction is UMP + ATP = UDP + ADP. It functions in the pathway pyrimidine metabolism; CTP biosynthesis via de novo pathway; UDP from UMP (UMPK route): step 1/1. With respect to regulation, inhibited by UTP. Its function is as follows. Catalyzes the reversible phosphorylation of UMP to UDP. The protein is Uridylate kinase of Xanthomonas campestris pv. campestris (strain ATCC 33913 / DSM 3586 / NCPPB 528 / LMG 568 / P 25).